Consider the following 395-residue polypeptide: Nuclear hormone receptor family member nhr-10 (395 aa).

Positions 15 to 90 form a DNA-binding region, nuclear receptor; that stretch reads EEVCLVCSDI…VGMDRNAIQQ (76 aa). 2 consecutive NR C4-type zinc fingers follow at residues 18–38 and 54–78; these read CLVC…CNGC and CQFQ…FEKC. The 241-residue stretch at 152–392 folds into the NR LBD domain; that stretch reads PSRTLIEAVV…TFAKQLLFGI (241 aa).

Belongs to the nuclear hormone receptor family.

Its subcellular location is the nucleus. Its function is as follows. Probable transcription factor that acts in a feed-forward loop with nhr-68 to activate genes involved in the vitamin B12-independent breakdown of the short-chain fatty acid propionate. This pathway is triggered in response to a diet low in vitamin B12, when canonical vitamin B12-dependent propionate breakdown cannot function; the resulting accumulation of propionate is probably sensed by nhr-10 and/or nhr-68. The sequence is that of Nuclear hormone receptor family member nhr-10 (nhr-10) from Caenorhabditis elegans.